The chain runs to 1295 residues: DNA-directed RNA polymerase subunit beta' (1295 aa).

Positions 60, 62, 75, and 78 each coordinate Zn(2+). The Mg(2+) site is built by Asp516, Asp518, and Asp520. Zn(2+)-binding residues include Cys841, Cys914, Cys921, and Cys924.

The protein belongs to the RNA polymerase beta' chain family. As to quaternary structure, the RNAP catalytic core consists of 2 alpha, 1 beta, 1 beta' and 1 omega subunit. When a sigma factor is associated with the core the holoenzyme is formed, which can initiate transcription. It depends on Mg(2+) as a cofactor. The cofactor is Zn(2+).

The enzyme catalyses RNA(n) + a ribonucleoside 5'-triphosphate = RNA(n+1) + diphosphate. In terms of biological role, DNA-dependent RNA polymerase catalyzes the transcription of DNA into RNA using the four ribonucleoside triphosphates as substrates. The chain is DNA-directed RNA polymerase subunit beta' from Dehalococcoides mccartyi (strain ATCC BAA-2100 / JCM 16839 / KCTC 5957 / BAV1).